A 363-amino-acid chain; its full sequence is Phosphoserine aminotransferase (363 aa).

Residue Arg-42 coordinates L-glutamate. Pyridoxal 5'-phosphate is bound by residues 76–77 (GR), Trp-102, Thr-156, Asp-175, and Gln-198. At Lys-199 the chain carries N6-(pyridoxal phosphate)lysine. 240–241 (NT) serves as a coordination point for pyridoxal 5'-phosphate.

It belongs to the class-V pyridoxal-phosphate-dependent aminotransferase family. SerC subfamily. In terms of assembly, homodimer. Pyridoxal 5'-phosphate is required as a cofactor.

Its subcellular location is the cytoplasm. The enzyme catalyses O-phospho-L-serine + 2-oxoglutarate = 3-phosphooxypyruvate + L-glutamate. It carries out the reaction 4-(phosphooxy)-L-threonine + 2-oxoglutarate = (R)-3-hydroxy-2-oxo-4-phosphooxybutanoate + L-glutamate. The protein operates within amino-acid biosynthesis; L-serine biosynthesis; L-serine from 3-phospho-D-glycerate: step 2/3. It participates in cofactor biosynthesis; pyridoxine 5'-phosphate biosynthesis; pyridoxine 5'-phosphate from D-erythrose 4-phosphate: step 3/5. Its function is as follows. Catalyzes the reversible conversion of 3-phosphohydroxypyruvate to phosphoserine and of 3-hydroxy-2-oxo-4-phosphonooxybutanoate to phosphohydroxythreonine. This is Phosphoserine aminotransferase from Shewanella baltica (strain OS185).